The primary structure comprises 67 residues: MSFLKKSLFLVLFLGFVSLSICEEEKRETEEKENEQEDDREERSEEKRLLGMIPVAISAISALSKLG.

Positions 1-22 (MSFLKKSLFLVLFLGFVSLSIC) are cleaved as a signal peptide. The propeptide occupies 23 to 48 (EEEKRETEEKENEQEDDREERSEEKR). The interval 26 to 47 (KRETEEKENEQEDDREERSEEK) is disordered. The span at 31-40 (EKENEQEDDR) shows a compositional bias: acidic residues. L66 bears the Leucine amide mark.

It belongs to the frog skin active peptide (FSAP) family. Medusin subfamily. As to expression, expressed by the skin glands.

It localises to the secreted. The protein localises to the target cell membrane. In terms of biological role, antibacterial peptide with moderate activity against the Gram-positive bacteria (S.aureus ATCC 25923, MIC=25 uM), but not against all other bacteria (both Gram-positive and Gram-negative) tested. Does not show activity against fungi, and against Leishmania species. It adopts an alpha-helical structure with very low amphipathicity in membrane environments. The polypeptide is Medusin-S1 (Phyllomedusa sauvagei (Sauvage's leaf frog)).